The primary structure comprises 489 residues: Glycogen synthase (489 aa).

Position 18 (lysine 18) interacts with ADP-alpha-D-glucose.

The protein belongs to the glycosyltransferase 1 family. Bacterial/plant glycogen synthase subfamily.

The enzyme catalyses [(1-&gt;4)-alpha-D-glucosyl](n) + ADP-alpha-D-glucose = [(1-&gt;4)-alpha-D-glucosyl](n+1) + ADP + H(+). Its pathway is glycan biosynthesis; glycogen biosynthesis. Synthesizes alpha-1,4-glucan chains using ADP-glucose. The protein is Glycogen synthase of Rhodopseudomonas palustris (strain BisB18).